The chain runs to 425 residues: Peroxisomal membrane protein PEX14 (425 aa).

2 disordered regions span residues 49–89 (RSQG…YRNA) and 247–425 (DEPI…AAQS). Residues 56 to 76 (SSSVASQVSSYSPSASQSSVA) show a composition bias toward low complexity. An SH3-binding motif is present at residues 89–97 (APPLPERDW). Polar residues predominate over residues 256–297 (PSLTTGANSLTSESSGRSSIPHSQSVPIRTQLTTPPSDSDTS). Composition is skewed to basic and acidic residues over residues 315–324 (DILRKEKNRT) and 333–366 (LGKD…PEED).

It belongs to the peroxin-14 family. In terms of assembly, interacts with PEX13 (via SH3 domain); forming the PEX13-PEX14 docking complex. Interacts with PEX5 (via WxxxF/Y motifs). Interacts with PEX20 (via WxxxF/Y motifs). Interacts with PEX3, PEX7, PEX8 and PEX17. Post-translationally, phosphorylated on serine or threonine residues.

The protein localises to the peroxisome membrane. Functionally, component of the PEX13-PEX14 docking complex, a translocon channel that specifically mediates the import of peroxisomal cargo proteins bound to PEX5 or PEX20 receptors. The PEX13-PEX14 docking complex forms a large import pore which can be opened to a diameter of about 9 nm. Mechanistically, PEX5 (or PEX20) receptor along with cargo proteins associates with the PEX14 subunit of the PEX13-PEX14 docking complex in the cytosol, leading to the insertion of the receptor into the organelle membrane with the concomitant translocation of the cargo into the peroxisome matrix. The polypeptide is Peroxisomal membrane protein PEX14 (Komagataella pastoris (Yeast)).